Consider the following 436-residue polypeptide: Xylose isomerase (436 aa).

Residues H100 and D103 contribute to the active site. Mg(2+)-binding residues include E231, E267, H270, D295, D306, D308, and D338.

It belongs to the xylose isomerase family. Homotetramer. The cofactor is Mg(2+).

Its subcellular location is the cytoplasm. The enzyme catalyses alpha-D-xylose = alpha-D-xylulofuranose. This chain is Xylose isomerase, found in Rhizobium etli (strain ATCC 51251 / DSM 11541 / JCM 21823 / NBRC 15573 / CFN 42).